Consider the following 96-residue polypeptide: CRISPR-associated endoribonuclease Cas2 (96 aa).

Asp-8 contacts Mg(2+).

It belongs to the CRISPR-associated endoribonuclease Cas2 protein family. Homodimer, forms a heterotetramer with a Cas1 homodimer. It depends on Mg(2+) as a cofactor.

Functionally, CRISPR (clustered regularly interspaced short palindromic repeat), is an adaptive immune system that provides protection against mobile genetic elements (viruses, transposable elements and conjugative plasmids). CRISPR clusters contain sequences complementary to antecedent mobile elements and target invading nucleic acids. CRISPR clusters are transcribed and processed into CRISPR RNA (crRNA). Functions as a ssRNA-specific endoribonuclease. Involved in the integration of spacer DNA into the CRISPR cassette. This chain is CRISPR-associated endoribonuclease Cas2, found in Chlorobaculum tepidum (strain ATCC 49652 / DSM 12025 / NBRC 103806 / TLS) (Chlorobium tepidum).